Reading from the N-terminus, the 337-residue chain is Tryptophan--tRNA ligase 2 (337 aa).

Residues 13-15 (QPT) and 22-23 (GN) each bind ATP. Residues 14–23 (PTAGSFHLGN) carry the 'HIGH' region motif. D139 contributes to the L-tryptophan binding site. ATP-binding positions include 151-153 (GED), I190, and 199-203 (KMSKS). The short motif at 199–203 (KMSKS) is the 'KMSKS' region element.

The protein belongs to the class-I aminoacyl-tRNA synthetase family. In terms of assembly, homodimer.

Its subcellular location is the cytoplasm. It carries out the reaction tRNA(Trp) + L-tryptophan + ATP = L-tryptophyl-tRNA(Trp) + AMP + diphosphate + H(+). Catalyzes the attachment of tryptophan to tRNA(Trp). The protein is Tryptophan--tRNA ligase 2 of Streptomyces avermitilis (strain ATCC 31267 / DSM 46492 / JCM 5070 / NBRC 14893 / NCIMB 12804 / NRRL 8165 / MA-4680).